The sequence spans 292 residues: UTP--glucose-1-phosphate uridylyltransferase (292 aa).

The protein belongs to the UDPGP type 2 family.

It catalyses the reaction alpha-D-glucose 1-phosphate + UTP + H(+) = UDP-alpha-D-glucose + diphosphate. In terms of biological role, may play a role in stationary phase survival. This Mycoplasma genitalium (strain ATCC 33530 / DSM 19775 / NCTC 10195 / G37) (Mycoplasmoides genitalium) protein is UTP--glucose-1-phosphate uridylyltransferase (galU).